The sequence spans 88 residues: Conotoxin tx9a (88 aa).

Residues 1 to 27 (MHLSLARSAVLMLLLLFALGNFVVVQS) form the signal peptide. The propeptide occupies 28 to 58 (GQITRDVDNGQLTDNRRNLQSKWKPVSLYMS). Intrachain disulfides connect Cys62-Cys76, Cys66-Cys78, and Cys72-Cys83. 4-carboxyglutamate; partial occurs at positions 68 and 73. Residue Asn87 is modified to Asparagine amide.

In terms of processing, exists in 4 different forms, depending on gamma-carboxyglutamations. Tx9a-EE does not contain gamma-carboxyglutamate, tx9a-E/gamma has one gamma-carboxyglutamate at position 73, tx9a-gamma/E has one gamma-carboxyglutamate at position 68, and tx9a-agmma/gamma has two gamma-carboxyglutamates at positions 68 and 73. Expressed by the venom duct. All different gamma-carboxyalted forms are mostly present in part 2, part 3 and part 4 of the venom duct. They are also found in part 1 (proximal part near the venom bulb) and part 5, but in lower quantity.

It is found in the secreted. Functionally, neurotoxin. In vivo, intracranial injection into mice of 10 pmol/g of the peptide induces running in circles and hyperactivity. At higher doses (50 pmol/g), the mice exhibit running and climbing symptoms for close to one hour. Between 130 and 150 pmol/g, characteristic 'spasmodic' symptomatology is elicited. A hand clap would make mice jump high and start running rapidly. When exposed to a loud hand clap, or if the cage cover were dropped, the mice lose motor control and exhibit seizure-like symptoms from which they eventually recover. At the highest doses tested (over 250 pmol/g), after the characteristic spasmodic symptomatology, lethality occurs. Injection of a similar dose range intramuscularly into Siamese fighting fish elicited no unusual symptomatology. The sequence is that of Conotoxin tx9a from Conus textile (Cloth-of-gold cone).